We begin with the raw amino-acid sequence, 515 residues long: RNA-binding region-containing protein 3 (515 aa).

The segment at 1–26 (MAVPEPSMPLSRGGPGSASLSPPRGD) is disordered. Ser21 is subject to Phosphoserine. One can recognise an RRM 1 domain in the interval 27 to 102 (RTLLVRHLPA…HTLVVEFAKE (76 aa)). 3 disordered regions span residues 107 to 133 (HSSC…EKKE), 215 to 254 (LHAP…EEDR), and 337 to 369 (ETEQ…PKPN). A Phosphoserine modification is found at Ser108. Residues 115–133 (AEKKKRLDDTVENDKEKKE) show a composition bias toward basic and acidic residues. A compositionally biased stretch (pro residues) spans 218 to 230 (PLPPTSPQPPEEP). The span at 337–348 (ETEQNNEEKNSD) shows a compositional bias: basic and acidic residues. Ser349 carries the post-translational modification Phosphoserine. The 84-residue stretch at 419–502 (CRIYVKNLAR…KPMVVQFARS (84 aa)) folds into the RRM 2 domain.

Component of the U11/U12 snRNPs that are part of the U12-type spliceosome. Found in a complex with m(7)G-capped U12 snRNA. Interacts with PDCD7.

The protein localises to the nucleus. In terms of biological role, participates in pre-mRNA U12-dependent splicing, performed by the minor spliceosome which removes U12-type introns. U12-type introns comprises less than 1% of all non-coding sequences. Binds to the 3'-stem-loop of m(7)G-capped U12 snRNA. The polypeptide is RNA-binding region-containing protein 3 (Rnpc3) (Rattus norvegicus (Rat)).